A 175-amino-acid polypeptide reads, in one-letter code: Protein CENTRORADIALIS-like (175 aa).

The protein belongs to the phosphatidylethanolamine-binding protein family. As to expression, expressed in tissues surrounding vascular bundles in hypocotyl of 2-week-old plants.

The protein localises to the cytoplasm. In terms of biological role, may form complexes with phosphorylated ligands by interfering with kinases and their effectors. Can substitute for TERMINAL FLOWER 1 (in vitro). The sequence is that of Protein CENTRORADIALIS-like (CEN) from Arabidopsis thaliana (Mouse-ear cress).